The primary structure comprises 69 residues: MGSLSIWHWLIVLAIALLLFGRGKIPELMGDVAKGIKSFKKGMNDDEETPPPAQSTTSRTVEHKADESK.

Residues Met-1 to Gly-21 form a helical membrane-spanning segment. Positions Lys-41–Lys-69 are disordered. The span at Thr-60–Lys-69 shows a compositional bias: basic and acidic residues.

It belongs to the TatA/E family. The Tat system comprises two distinct complexes: a TatABC complex, containing multiple copies of TatA, TatB and TatC subunits, and a separate TatA complex, containing only TatA subunits. Substrates initially bind to the TatABC complex, which probably triggers association of the separate TatA complex to form the active translocon.

It localises to the cell inner membrane. Functionally, part of the twin-arginine translocation (Tat) system that transports large folded proteins containing a characteristic twin-arginine motif in their signal peptide across membranes. TatA could form the protein-conducting channel of the Tat system. The chain is Sec-independent protein translocase protein TatA from Rhizobium rhizogenes (strain K84 / ATCC BAA-868) (Agrobacterium radiobacter).